A 339-amino-acid chain; its full sequence is UDP-galactose transporter homolog 1 (339 aa).

9 helical membrane passes run 5 to 25, 43 to 63, 91 to 111, 138 to 158, 171 to 191, 208 to 228, 246 to 268, 273 to 295, and 301 to 321; these read ILKH…WGLL, VPYI…LIYI, AISA…TYML, LVVL…HKPS, SSLI…LTNA, HLMF…MVLV, ISRY…FYTL, SLVL…IIVY, and LWQW…SMGK.

This sequence belongs to the nucleotide-sugar transporter family. SLC35B subfamily.

It localises to the endoplasmic reticulum membrane. In terms of biological role, may be involved in specific transport of UDP-Gal from the cytosol to the Golgi lumen. Involved in the maintenance of optimal conditions for the folding of secretory pathway proteins in the endoplasmic reticulum. This is UDP-galactose transporter homolog 1 (HUT1) from Kluyveromyces lactis (strain ATCC 8585 / CBS 2359 / DSM 70799 / NBRC 1267 / NRRL Y-1140 / WM37) (Yeast).